We begin with the raw amino-acid sequence, 357 residues long: MKKYKIIMTGGGSAGHVTPNLALVPKLKELGFEIKYIGSKNGIEKEIITKENIPYYSISSGKLRRYFDIKNFTDPFKVLKGVMDASRILSKEKPDVIFSKGGFVTVPVVIAASMKKIPVVSHESDLTPGLANKIASPFCDTLCVTFPESLKYIKDNKGELTGTPIREDLLKGDKERGRKFCNFKENKKVLMIIGGSLGSKVINESVRKILNEILKEYNVIHLCGKGNLDESLKNLDGYRQYEYISEELPDLMALADLVISRAGANTIFELLALRKLNILIPLSANASRGDQVLNANSFEKSGYSMVIKEEELNSELLLKSIKDLEKNREKYLNSMKMSKIGNGVNNIIDIIKKSAHM.

Residues 13 to 15, Arg-166, Ser-196, and Gln-291 contribute to the UDP-N-acetyl-alpha-D-glucosamine site; that span reads SAG.

The protein belongs to the glycosyltransferase 28 family. MurG subfamily.

It is found in the cell membrane. The enzyme catalyses di-trans,octa-cis-undecaprenyl diphospho-N-acetyl-alpha-D-muramoyl-L-alanyl-D-glutamyl-meso-2,6-diaminopimeloyl-D-alanyl-D-alanine + UDP-N-acetyl-alpha-D-glucosamine = di-trans,octa-cis-undecaprenyl diphospho-[N-acetyl-alpha-D-glucosaminyl-(1-&gt;4)]-N-acetyl-alpha-D-muramoyl-L-alanyl-D-glutamyl-meso-2,6-diaminopimeloyl-D-alanyl-D-alanine + UDP + H(+). It functions in the pathway cell wall biogenesis; peptidoglycan biosynthesis. Functionally, cell wall formation. Catalyzes the transfer of a GlcNAc subunit on undecaprenyl-pyrophosphoryl-MurNAc-pentapeptide (lipid intermediate I) to form undecaprenyl-pyrophosphoryl-MurNAc-(pentapeptide)GlcNAc (lipid intermediate II). The sequence is that of UDP-N-acetylglucosamine--N-acetylmuramyl-(pentapeptide) pyrophosphoryl-undecaprenol N-acetylglucosamine transferase from Clostridium perfringens (strain ATCC 13124 / DSM 756 / JCM 1290 / NCIMB 6125 / NCTC 8237 / Type A).